The primary structure comprises 591 residues: Zinc finger protein 48 (591 aa).

Met-1 is subject to N-acetylmethionine. Disordered regions lie at residues 1–24 and 55–80; these read MEAS…IKEE and GLGK…GSND. Composition is skewed to basic and acidic residues over residues 8-24 and 55-65; these read EFEH…IKEE and GLGKRQPRDPV. At Ser-12 the chain carries Phosphoserine. Lys-58 is covalently cross-linked (Glycyl lysine isopeptide (Lys-Gly) (interchain with G-Cter in SUMO2)). 2 C2H2-type zinc fingers span residues 83–105 and 111–133; these read AVCG…QRTH and YKCG…QRTH. Residues 131–160 form a disordered region; it reads RTHTGEKAYRVRPPAPGPPKMPRSRIPAGE. Residue Lys-150 forms a Glycyl lysine isopeptide (Lys-Gly) (interchain with G-Cter in SUMO2) linkage. 2 C2H2-type zinc fingers span residues 163–185 and 191–213; these read TICG…QRTH and YKCG…QRTH. Residues 206 to 241 are disordered; the sequence is RIKHQRTHRGDQLPRPVVPRRQPSPAAPAAPHRPKA. Residues 224 to 235 are compositionally biased toward low complexity; the sequence is PRRQPSPAAPAA. Lys-240 participates in a covalent cross-link: Glycyl lysine isopeptide (Lys-Gly) (interchain with G-Cter in SUMO2). C2H2-type zinc fingers lie at residues 246–268 and 274–296; these read YICT…QRSH and FGCD…LRVH. Residue Lys-300 forms a Glycyl lysine isopeptide (Lys-Gly) (interchain with G-Cter in SUMO2) linkage. 2 consecutive C2H2-type zinc fingers follow at residues 302–324 and 330–352; these read YLCP…LRTH and HACP…RLTH. The segment at 372–429 is disordered; the sequence is PPPPPLGTSPSLTPRSPSHSSDGPFGLPGLEPEPGGPQAGEPPPPLAGDKPHKCPECG. Low complexity predominate over residues 379–404; that stretch reads TSPSLTPRSPSHSSDGPFGLPGLEPE. The segment at 423–445 adopts a C2H2-type 9 zinc-finger fold; sequence HKCPECGKGFRRSSDLVKHHRVH. A Glycyl lysine isopeptide (Lys-Gly) (interchain with G-Cter in SUMO2) cross-link involves residue Lys-449. The C2H2-type 10 zinc finger occupies 451 to 473; it reads YLCPECGKGFADSSARVKHLRTH. A disordered region spans residues 464–512; the sequence is SARVKHLRTHQGERTRPPPPPSTLLRPHNPPGSVPIVPQSRVQGRPSGP. Over residues 480–496 the composition is skewed to pro residues; it reads PPPPPSTLLRPHNPPGS. 2 consecutive C2H2-type zinc fingers follow at residues 516-538 and 544-566; these read HVCG…RRTH and YKCA…QRGH. Positions 564 to 591 are disordered; the sequence is RGHLALKPFGVGDGPPRPLKEESPAGLE. Over residues 581-591 the composition is skewed to basic and acidic residues; the sequence is PLKEESPAGLE. A Glycyl lysine isopeptide (Lys-Gly) (interchain with G-Cter in SUMO2) cross-link involves residue Lys-583.

The protein belongs to the krueppel C2H2-type zinc-finger protein family.

It localises to the nucleus. Its function is as follows. May be involved in transcriptional regulation. The chain is Zinc finger protein 48 (Znf48) from Mus musculus (Mouse).